Reading from the N-terminus, the 149-residue chain is Transcriptional repressor NrdR (149 aa).

Residues Cys-3–Cys-34 fold into a zinc finger. An ATP-cone domain is found at Pro-49 to Glu-139.

This sequence belongs to the NrdR family. It depends on Zn(2+) as a cofactor.

In terms of biological role, negatively regulates transcription of bacterial ribonucleotide reductase nrd genes and operons by binding to NrdR-boxes. This is Transcriptional repressor NrdR from Haemophilus ducreyi (strain 35000HP / ATCC 700724).